The primary structure comprises 387 residues: Putative acid--amine ligase YjfC (387 aa).

Residue 101–103 (RMD) participates in ATP binding. Residues aspartate 103, glutamate 116, and asparagine 118 each coordinate Mg(2+). Residues lysine 265, lysine 302, glycine 309, glutamine 337, and 372–374 (LIT) contribute to the ATP site.

Belongs to the glutathionylspermidine synthase preATP-grasp family.

Functionally, may be a ligase forming an amide bond. Shows ATPase activity. Despite its similarity to the C-terminal synthetase domain of Gss, is not a glutathionylspermidine (Gsp) synthetase. Cannot synthesize Gsp, glutathione (GSH), or GSH intermediates, from GSH and spermidine, cysteine and glutamate, gamma-glutamylcysteine and spermidine, and gamma-glutamylcysteine and glycine. Does not bind to Gsp. This is Putative acid--amine ligase YjfC (yjfC) from Escherichia coli (strain K12).